Here is a 104-residue protein sequence, read N- to C-terminus: Large ribosomal subunit protein uL24 (104 aa).

The span at 82–92 shows a compositional bias: basic and acidic residues; the sequence is RIGYRTDENGK. The tract at residues 82–104 is disordered; the sequence is RIGYRTDENGKRVRISRRNGKDI. Residues 93–104 are compositionally biased toward basic residues; that stretch reads RVRISRRNGKDI.

Belongs to the universal ribosomal protein uL24 family. As to quaternary structure, part of the 50S ribosomal subunit.

Its function is as follows. One of two assembly initiator proteins, it binds directly to the 5'-end of the 23S rRNA, where it nucleates assembly of the 50S subunit. In terms of biological role, one of the proteins that surrounds the polypeptide exit tunnel on the outside of the subunit. The polypeptide is Large ribosomal subunit protein uL24 (Nocardia farcinica (strain IFM 10152)).